A 197-amino-acid polypeptide reads, in one-letter code: Transcription factor FapR (197 aa).

This sequence belongs to the FapR family.

In terms of biological role, transcriptional factor involved in regulation of membrane lipid biosynthesis by repressing genes involved in fatty acid and phospholipid metabolism. The polypeptide is Transcription factor FapR (Bacillus mycoides (strain KBAB4) (Bacillus weihenstephanensis)).